Reading from the N-terminus, the 1710-residue chain is Extracellular matrix protein A (1710 aa).

The signal sequence occupies residues 1 to 22 (MKISIFILLLFISSMVIISVNA). 66 Cys-rich CT repeats span residues 43-70 (NRWSTDMCSAGLLFGKYCTHTQICCDDE), 71-94 (NACTIDSCSKTSGCVHTPINVDDK), 95-117 (NPCTIDSCIKGFISHTQISCDDK), 118-141 (NACTIDSCDCSSGCQNKPMSCDDN), 142-165 (NPCTVDSCNNSTGCRNTPISVDDN), 166-189 (NPCTIDSCSKSTGVVHIPINVDDL), 190-213 (NPCTIDACTKEGGVTHTPVNVDDN), 214-237 (NKCTTDSCSLFTGITHTEICCDDN), 238-261 (NACTDDSCSPSTGCVNTPISCDDK), 262-285 (NPCTVDSCNNSTGCCYTPINVDDN), 286-309 (NPCTIDACTKSTGVTHTPINVDDN), 310-333 (NQCTTDSCTKEGGVTHTPVNTDDN), 334-357 (NPCTVDSCSPFTGVSHTPINVDDN), 358-381 (NKCTIDACTKEGGVTHTPVNTDDN), 382-405 (NACTLDSCSPLTGVTHTPINCDDK), 406-429 (KACTVDSCSNSTGCVNTPISCDDN), 430-453 (NPCTVDTCDDSTGCCNTPINVDDN), 454-477 (NPCTVDACTKSTGVTHTPVNVDDN), 478-501 (NKCTIDACTKEGGVTHTPVNTDDN), 502-525 (NACTLDNCSPLTGVTHTPINCDDK), 526-549 (KACTVDSCSNSTGCVNTPISCDDN), 550-573 (NPCTVDSCDDITGCCNTPINVDDN), 574-597 (NPCTVDACTKSTGVTHTPVNVDDN), 598-621 (NKCTIDACTKEGGVTHTPVNTDDN), 622-645 (NACTLDSCSPSTGVSHTPINCDDS), 646-669 (NPCTVDSCSNSTGCVNTPVNVDDN), 670-693 (NPCTVDACTKSTGVTHTPVNVDDN), 694-717 (NKCTIDACTKEGGVTHTPVNTDDN), 718-741 (NACTIDSCSPSTGISHTPINCDDK), 742-765 (KACTVDSCSNSTGCVNTPISCDDN), 766-789 (NPCTVDSCDDLTGCCNTPINVDDN), 790-813 (NPCTIDACTKSTGVTHTPVNVDDN), 814-837 (NKCTIDTCTKEGGVTHTPVNTDDN), 838-861 (NACTLDSCSPSTGVSHTPINCDDN), 862-885 (NKCTVDSCSNSTGCVNTPINCDDS), 886-909 (NPCTVDSCNNSTGCVNTPVNVDDN), 910-933 (NPCTVDACTKSTGVTHTPVNVDDN), 934-957 (NKCTIDACTKEGGVTHTPVNTDDN), 958-981 (NACTIDACTKEGGVTHTPVNTDDN), 982-1005 (NACTLDSCSPSTGVSHTPINCDDS), 1006-1029 (NPCTVDSCSNSTGCCNTPINVDDN), 1030-1053 (NPCTVDSCTKPTGVTHTPVNVDDN), 1054-1077 (NKCTIDACTKEGGVTHTPVNTDDN), 1078-1101 (NACTLDSCSPSTGISHAPINCDDS), 1102-1125 (NPCTIDSCNNSTGCCNTPINVDDN), 1126-1149 (NPCTVDSCTKSGGVTHTPVNVDDN), 1150-1173 (NKCTTDACTKEGGVTHTPISCDDN), 1174-1197 (NACTIDSCSNSTGCVNTPISCDDR), 1198-1221 (NPCTVDTCTKEKGCQHSPIDTDDS), 1222-1245 (NKCTIDACSSTTGVTHTSINCDDN), 1246-1269 (NACTFDSCSNSTGCVSTPISCDDK), 1270-1293 (NPCTLDSCDKKTGCCNTPINVDDN), 1294-1317 (DKCTTDSCTKEGGVTHTPISCDDN), 1318-1341 (NACTTDSCSKSTGCVNKPISCDDS), 1342-1365 (NPCTVDSCSNSTGCCNTPINVDDN), 1366-1389 (NPCTTDSCTKSGGVTHTPVNVDDN), 1390-1413 (NKCTTDSCTKEGGITHTPISCDDN), 1414-1437 (NPCTLDSCSPTTGCVNKPMNVDDN), 1438-1461 (DACTTDTCNKDGTITHTPINTDDN), 1462-1485 (NKCTLDACSPKTGVTHTPINCDDG), 1486-1509 (NKCTINSCSPSVGCISTPVSCPKP), 1511-1534 (DKCSISQCDSAKGCIEVPMNCTSD), 1558-1581 (NKCQVAKCDLIKGCTVSNVVCDDG), 1582-1606 (NACTEDSCCSDTGKCQFEPIKLPKN), 1608-1632 (NKCIISKCDPIKGTITNSTVNCECD), and 1658-1682 (NPKTADSCDSKTGKCINKPYNVITS). 2 N-linked (GlcNAc...) asparagine glycosylation sites follow: Asn-150 and Asn-151. N-linked (GlcNAc...) asparagine glycosylation is found at Asn-270 and Asn-271. N-linked (GlcNAc...) asparagine glycosylation is present at Asn-415. A glycan (N-linked (GlcNAc...) asparagine) is linked at Asn-535. Residue Asn-655 is glycosylated (N-linked (GlcNAc...) asparagine). N-linked (GlcNAc...) asparagine glycosylation occurs at Asn-751. Residues Asn-871, Asn-894, and Asn-895 are each glycosylated (N-linked (GlcNAc...) asparagine). N-linked (GlcNAc...) asparagine glycosylation is present at Asn-1015. N-linked (GlcNAc...) asparagine glycosylation is found at Asn-1110 and Asn-1111. Residue Asn-1183 is glycosylated (N-linked (GlcNAc...) asparagine). An N-linked (GlcNAc...) asparagine glycan is attached at Asn-1255. A glycan (N-linked (GlcNAc...) asparagine) is linked at Asn-1351. N-linked (GlcNAc...) asparagine glycosylation occurs at Asn-1530. Asn-1624 carries an N-linked (GlcNAc...) asparagine glycan.

The protein localises to the secreted. The polypeptide is Extracellular matrix protein A (ecmA) (Dictyostelium discoideum (Social amoeba)).